Consider the following 319-residue polypeptide: Ribosomal protein L11 methyltransferase (319 aa).

Thr165, Gly186, Asp208, and Asn251 together coordinate S-adenosyl-L-methionine.

This sequence belongs to the methyltransferase superfamily. PrmA family.

The protein localises to the cytoplasm. The catalysed reaction is L-lysyl-[protein] + 3 S-adenosyl-L-methionine = N(6),N(6),N(6)-trimethyl-L-lysyl-[protein] + 3 S-adenosyl-L-homocysteine + 3 H(+). Methylates ribosomal protein L11. The polypeptide is Ribosomal protein L11 methyltransferase (Limosilactobacillus reuteri subsp. reuteri (strain JCM 1112) (Lactobacillus reuteri)).